Consider the following 910-residue polypeptide: Aconitate hydratase A (910 aa).

[4Fe-4S] cluster is bound by residues Cys454, Cys520, and Cys523.

The protein belongs to the aconitase/IPM isomerase family. In terms of assembly, monomer. Requires [4Fe-4S] cluster as cofactor.

It carries out the reaction citrate = D-threo-isocitrate. The catalysed reaction is (2S,3R)-3-hydroxybutane-1,2,3-tricarboxylate = 2-methyl-cis-aconitate + H2O. Its pathway is carbohydrate metabolism; tricarboxylic acid cycle; isocitrate from oxaloacetate: step 2/2. It participates in organic acid metabolism; propanoate degradation. In terms of biological role, involved in the catabolism of short chain fatty acids (SCFA) via the tricarboxylic acid (TCA)(acetyl degradation route) and probably the 2-methylcitrate cycle I (propionate degradation route). Catalyzes the reversible isomerization of citrate to isocitrate via cis-aconitate. Could catalyze the hydration of 2-methyl-cis-aconitate to yield (2R,3S)-2-methylisocitrate. The apo form of AcnA functions as a RNA-binding regulatory protein. This Pseudomonas aeruginosa (strain ATCC 15692 / DSM 22644 / CIP 104116 / JCM 14847 / LMG 12228 / 1C / PRS 101 / PAO1) protein is Aconitate hydratase A (acnA).